The primary structure comprises 239 residues: Probable GTP-binding protein EngB (239 aa).

One can recognise an EngB-type G domain in the interval Gln-23–Leu-219. Residues Gly-31–Ser-38, Gly-58–His-62, Asp-92–Gly-95, Thr-159–Asp-162, and Phe-193–Ala-200 contribute to the GTP site. Residues Ser-38 and Thr-60 each coordinate Mg(2+).

This sequence belongs to the TRAFAC class TrmE-Era-EngA-EngB-Septin-like GTPase superfamily. EngB GTPase family. It depends on Mg(2+) as a cofactor.

Necessary for normal cell division and for the maintenance of normal septation. The chain is Probable GTP-binding protein EngB from Herminiimonas arsenicoxydans.